The sequence spans 695 residues: A-kinase anchor protein 17A (695 aa).

Residues 83–112 (VENKSLVKSFLACLDGKTIKLSGFSDILKV) are PKA-RI and PKA-RII subunit binding domain. K118 participates in a covalent cross-link: Glycyl lysine isopeptide (Lys-Gly) (interchain with G-Cter in SUMO1); alternate. A Glycyl lysine isopeptide (Lys-Gly) (interchain with G-Cter in SUMO2); alternate cross-link involves residue K118. An RRM domain is found at 147-256 (DTIHLEGLPC…KAVACNIKVS (110 aa)). A disordered region spans residues 279–337 (QELEQQREEQKRREKEAEERQRAEERKQKELEELERERKREEKLRKREQKQRDRELRRN). The PKA-RI-alpha subunit binding domain stretch occupies residues 425 to 454 (LGLQRKERELRERLLSILLSKKPDDSHTHD). Residues 482 to 695 (TTLHPLGGQP…PSRHRSTWNR (214 aa)) are disordered. S537 is modified (phosphoserine). Positions 567-585 (VSRKDTRSEQDKCNREPSK) are enriched in basic and acidic residues. Composition is skewed to basic residues over residues 598–609 (RHKRERSRARRA) and 618–628 (RKERRPHKKHA). The segment covering 629 to 644 (YKDDSPRRRSTSPDHT) has biased composition (basic and acidic residues). Position 633 is a phosphoserine (S633). Composition is skewed to basic residues over residues 645-658 (RSRR…HRRE) and 666-695 (SASR…TWNR).

Monomer. Component of the spliceosome. Interacts with ZRANB2 and SFRS1/ASF through its Arg/Ser-rich domain. Interacts with RI and RII subunits of PKA. In terms of tissue distribution, widely expressed. Found in heart, brain, lung, liver, skeletal muscle, kidney and pancreas. Expressed in activated B-cells and placenta. Expressed in all cell lines tested including Jurkat-TAg, U-937 and HEK293 cells.

It localises to the nucleus speckle. Splice factor regulating alternative splice site selection for certain mRNA precursors. Mediates regulation of pre-mRNA splicing in a PKA-dependent manner. The chain is A-kinase anchor protein 17A (AKAP17A) from Homo sapiens (Human).